Consider the following 961-residue polypeptide: Glycine dehydrogenase (decarboxylating) (961 aa).

At K709 the chain carries N6-(pyridoxal phosphate)lysine.

The protein belongs to the GcvP family. In terms of assembly, the glycine cleavage system is composed of four proteins: P, T, L and H. Pyridoxal 5'-phosphate is required as a cofactor.

The catalysed reaction is N(6)-[(R)-lipoyl]-L-lysyl-[glycine-cleavage complex H protein] + glycine + H(+) = N(6)-[(R)-S(8)-aminomethyldihydrolipoyl]-L-lysyl-[glycine-cleavage complex H protein] + CO2. In terms of biological role, the glycine cleavage system catalyzes the degradation of glycine. The P protein binds the alpha-amino group of glycine through its pyridoxal phosphate cofactor; CO(2) is released and the remaining methylamine moiety is then transferred to the lipoamide cofactor of the H protein. The protein is Glycine dehydrogenase (decarboxylating) of Streptomyces griseus subsp. griseus (strain JCM 4626 / CBS 651.72 / NBRC 13350 / KCC S-0626 / ISP 5235).